Reading from the N-terminus, the 872-residue chain is Alanine--tRNA ligase (872 aa).

Zn(2+) contacts are provided by His-567, His-571, Cys-669, and His-673.

Belongs to the class-II aminoacyl-tRNA synthetase family. It depends on Zn(2+) as a cofactor.

The protein localises to the cytoplasm. The enzyme catalyses tRNA(Ala) + L-alanine + ATP = L-alanyl-tRNA(Ala) + AMP + diphosphate. In terms of biological role, catalyzes the attachment of alanine to tRNA(Ala) in a two-step reaction: alanine is first activated by ATP to form Ala-AMP and then transferred to the acceptor end of tRNA(Ala). Also edits incorrectly charged Ser-tRNA(Ala) and Gly-tRNA(Ala) via its editing domain. This is Alanine--tRNA ligase from Streptococcus sanguinis (strain SK36).